Reading from the N-terminus, the 330-residue chain is Glucan endo-1,3-beta-glucosidase GIII (330 aa).

Residues 1-25 (MARKGVDVAVALVLVALAAFPAVHS) form the signal peptide. Glu117 (proton donor) is an active-site residue. Glu255 acts as the Nucleophile in catalysis.

It belongs to the glycosyl hydrolase 17 family.

The catalysed reaction is Hydrolysis of (1-&gt;3)-beta-D-glucosidic linkages in (1-&gt;3)-beta-D-glucans.. Functionally, may provide a degree of protection against microbial invasion of germinated barley grain through its ability to degrade fungal cell wall polysaccharides. The protein is Glucan endo-1,3-beta-glucosidase GIII of Hordeum vulgare (Barley).